A 434-amino-acid polypeptide reads, in one-letter code: F-box/FBD/LRR-repeat protein At3g26920 (434 aa).

Residues 16–65 (EDRISQLPEALLLQILSLLPTKEVVAVSVLAKRWRFLWKMVPSLEFFYYF) form the F-box domain. 7 LRR repeats span residues 69–95 (LERFSYNVSKCLFSHQAPFLQSLHLNM), 100–125 (DPRIMDFEILIGIAFGRQLRKLVLKV), 145–172 (TLELYHCILIDVPFPVCLKSLRTLNLHE), 173–198 (VEFVNDESVVNLLAGCISLENLVIHQ), 219–244 (VIVEYYEEFSVFVVNTPSLKYLKIEG), 265–290 (IIDVSFKVFESILGSLASVQRLSLKV), and 315–341 (TYKPKWWNLLTLMLDTSPNLQVLKIFD). The 51-residue stretch at 353 to 403 (KWNEPKNVPECLLLHLETFVWTCYEGKLENEIELAKYILRNARRLKKATFS) folds into the FBD domain.

This chain is F-box/FBD/LRR-repeat protein At3g26920, found in Arabidopsis thaliana (Mouse-ear cress).